Consider the following 554-residue polypeptide: D-3-phosphoglycerate dehydrogenase (554 aa).

NAD(+) is bound by residues 177 to 178, Asp-197, 256 to 258, and Asp-282; these read KI and CSR. The active site involves Arg-258. The active site involves Glu-287. The Proton donor role is filled by His-305. 305–308 is an NAD(+) binding site; sequence HLGA. One can recognise an ACT domain in the interval 482–554; it reads MLFTLHRDMP…GIRDAYTVKL (73 aa).

The protein belongs to the D-isomer specific 2-hydroxyacid dehydrogenase family.

It carries out the reaction (2R)-3-phosphoglycerate + NAD(+) = 3-phosphooxypyruvate + NADH + H(+). The enzyme catalyses (R)-2-hydroxyglutarate + NAD(+) = 2-oxoglutarate + NADH + H(+). It participates in amino-acid biosynthesis; L-serine biosynthesis; L-serine from 3-phospho-D-glycerate: step 1/3. Its function is as follows. Catalyzes the reversible oxidation of 3-phospho-D-glycerate to 3-phosphonooxypyruvate, the first step of the phosphorylated L-serine biosynthesis pathway. Also catalyzes the reversible oxidation of 2-hydroxyglutarate to 2-oxoglutarate. This Synechocystis sp. (strain ATCC 27184 / PCC 6803 / Kazusa) protein is D-3-phosphoglycerate dehydrogenase (serA).